The primary structure comprises 508 residues: TATA box-binding protein-like 1 (508 aa).

Disordered regions lie at residues 145–190 (QISY…QMHH), 236–262 (EPIP…PMPD), and 456–479 (QKKR…FDDS).

Belongs to the TBP family.

It is found in the nucleus. Its function is as follows. May be a general transcription factor. Plays an essential role for RNA polymerase II/ama-1 transcription in early embryos whereby it activates a subset of RNA polymerase II promoters and facilitates the reestablishment of transcription after mitosis. The sequence is that of TATA box-binding protein-like 1 from Caenorhabditis elegans.